Consider the following 205-residue polypeptide: High frequency lysogenization protein HflD homolog (205 aa).

It belongs to the HflD family.

The protein resides in the cytoplasm. The protein localises to the cell inner membrane. The polypeptide is High frequency lysogenization protein HflD homolog (Vibrio vulnificus (strain CMCP6)).